We begin with the raw amino-acid sequence, 1002 residues long: uncharacterized protein (1002 aa).

This is an uncharacterized protein from Fiji disease virus (isolate Sugarcane) (FDV).